Here is a 284-residue protein sequence, read N- to C-terminus: Hypersensitive-induced response protein 1 (284 aa).

Residue Gly2 is the site of N-myristoyl glycine attachment.

In terms of assembly, interacts with LRR1.

It is found in the cell membrane. Its function is as follows. Positive regulator of hypersensitive response (HR)-like cell death. May be involved in potassium ion channel regulation. The protein is Hypersensitive-induced response protein 1 of Oryza sativa subsp. japonica (Rice).